The primary structure comprises 248 residues: UPF0736 protein BcerKBAB4_1085 (248 aa).

This sequence belongs to the UPF0736 family.

The protein is UPF0736 protein BcerKBAB4_1085 of Bacillus mycoides (strain KBAB4) (Bacillus weihenstephanensis).